The sequence spans 229 residues: MQVYSPSKISQQLETFLNSVANGLGHTMSHAMSQTFSETIVASVAKKAPKTSVLAAAQAAMQAEDKVSKPKKVKKTKSYADAAPKRVKKVKAPKEDTVVSEPEEAVVEQQEKQQPEKAVVEQQEKQQPEEAVVEQQEKQQPEEAVVEQQEKQQPEEAVVESEQPEQPEQPERQQQAQPERQQQAQPERQQQAQPEEAEDAEQEPVEQPTAKPKKVRKTQTESEDKPKRG.

The interval 61–229 (MQAEDKVSKP…TESEDKPKRG (169 aa)) is disordered. A compositionally biased stretch (basic and acidic residues) spans 109 to 128 (QQEKQQPEKAVVEQQEKQQP). Low complexity predominate over residues 166 to 194 (QPEQPERQQQAQPERQQQAQPERQQQAQP). Positions 195–204 (EEAEDAEQEP) are enriched in acidic residues. Residues 218–229 (TQTESEDKPKRG) are compositionally biased toward basic and acidic residues.

This is an uncharacterized protein from Frog virus 3 (isolate Goorha) (FV-3).